The sequence spans 478 residues: MKVTLPDFRQAGVLVVGDVMLDRYWYGPTSRISPEAPVPVVKVDTIEERPGGAANVAMNIAALGAGSRLVGLTGIDDAARALNAKLGEVNVKCDFVSVPTHPTITKLRVLSRNQQLIRLDFEEGFEGIDPQPIIERIQLALPKIGALVLSDYAKGALAHVQTMIQTAKAAGVPVLIDPKGTDFARYRGATLLTPNLSEFEAVAGRCKTEEELVERGMQLVADYELSALLITRSEQGMTLLQPGKAPLHLPTQAQEVYDVTGAGDTVIGVLAAALAAGNPLEEACFLANAAAGVVVGKLGTSTVTPIELENAIRGRADTGFGVMTEEQLKKAVELARQRGEKIVMTNGCFDILHAGHVSYLANARKLGDRLIVAVNSDASTKRLKGPTRPVNPLPQRMIVLGALEAVDWVVPFEEDTPQRLIASILPDILVKGGDYQPHEIAGSEEVWANGGEVKVLNFEDGCSTTNIINTIKANASKS.

The interval 1 to 318 (MKVTLPDFRQ…ENAIRGRADT (318 aa)) is ribokinase. 195 to 198 (NLSE) contacts ATP. Residue Asp264 is part of the active site. Positions 344-478 (MTNGCFDILH…NTIKANASKS (135 aa)) are cytidylyltransferase.

This sequence in the N-terminal section; belongs to the carbohydrate kinase PfkB family. In the C-terminal section; belongs to the cytidylyltransferase family. Homodimer.

The catalysed reaction is D-glycero-beta-D-manno-heptose 7-phosphate + ATP = D-glycero-beta-D-manno-heptose 1,7-bisphosphate + ADP + H(+). The enzyme catalyses D-glycero-beta-D-manno-heptose 1-phosphate + ATP + H(+) = ADP-D-glycero-beta-D-manno-heptose + diphosphate. The protein operates within nucleotide-sugar biosynthesis; ADP-L-glycero-beta-D-manno-heptose biosynthesis; ADP-L-glycero-beta-D-manno-heptose from D-glycero-beta-D-manno-heptose 7-phosphate: step 1/4. It functions in the pathway nucleotide-sugar biosynthesis; ADP-L-glycero-beta-D-manno-heptose biosynthesis; ADP-L-glycero-beta-D-manno-heptose from D-glycero-beta-D-manno-heptose 7-phosphate: step 3/4. Catalyzes the phosphorylation of D-glycero-D-manno-heptose 7-phosphate at the C-1 position to selectively form D-glycero-beta-D-manno-heptose-1,7-bisphosphate. In terms of biological role, catalyzes the ADP transfer from ATP to D-glycero-beta-D-manno-heptose 1-phosphate, yielding ADP-D-glycero-beta-D-manno-heptose. In Pectobacterium carotovorum subsp. carotovorum (strain PC1), this protein is Bifunctional protein HldE.